Reading from the N-terminus, the 138-residue chain is Holo-[acyl-carrier-protein] synthase (138 aa).

Asp8 and Glu54 together coordinate Mg(2+).

The protein belongs to the P-Pant transferase superfamily. AcpS family. Requires Mg(2+) as cofactor.

The protein localises to the cytoplasm. The enzyme catalyses apo-[ACP] + CoA = holo-[ACP] + adenosine 3',5'-bisphosphate + H(+). In terms of biological role, transfers the 4'-phosphopantetheine moiety from coenzyme A to a Ser of acyl-carrier-protein. The polypeptide is Holo-[acyl-carrier-protein] synthase (Roseiflexus sp. (strain RS-1)).